The following is a 158-amino-acid chain: C-type lectin galactose-binding isoform (158 aa).

The N-terminal stretch at 1-23 (MGRFLLVTLSLLVMAFFLNGANS) is a signal peptide. Cystine bridges form between cysteine 26–cysteine 37, cysteine 54–cysteine 154, and cysteine 129–cysteine 146. The region spanning 33–155 (RNGFCYKVFN…CTALRPFLCQ (123 aa)) is the C-type lectin domain. Glutamine 119, aspartate 121, and glutamate 127 together coordinate Ca(2+). The Galactose-binding motif lies at 119 to 121 (QPD). Asparagine 134 is a glycosylation site (N-linked (GlcNAc...) asparagine). Residues asparagine 142 and aspartate 143 each contribute to the Ca(2+) site.

This sequence belongs to the true venom lectin family. As to quaternary structure, dimer. Probably disulfide-linked homodimer. In terms of tissue distribution, expressed by the venom gland.

Its subcellular location is the secreted. Functionally, galactose-binding lectin that binds to and agglutinates erythrocytes in a calcium-dependent manner. In Pseudechis australis (Mulga snake), this protein is C-type lectin galactose-binding isoform.